Here is a 588-residue protein sequence, read N- to C-terminus: Methylcrotonoyl-CoA carboxylase beta chain, mitochondrial (588 aa).

The 258-residue stretch at 72-329 (MNSTLKQLKE…KKQPSPVITE (258 aa)) folds into the CoA carboxyltransferase N-terminal domain. Residues 72–570 (MNSTLKQLKE…RKVIALSLSA (499 aa)) are carboxyltransferase. A CoA carboxyltransferase C-terminal domain is found at 329-570 (ETEEPLYPTS…RKVIALSLSA (242 aa)). Residues 366–395 (RFDEFKELYGTTLICGFARVHGMPVGIIAN) are acyl-CoA binding.

It belongs to the AccD/PCCB family. As to quaternary structure, probably a dodecamer composed of six biotin-containing alpha subunits and six beta subunits.

Its subcellular location is the mitochondrion matrix. The enzyme catalyses 3-methylbut-2-enoyl-CoA + hydrogencarbonate + ATP = 3-methyl-(2E)-glutaconyl-CoA + ADP + phosphate + H(+). Its pathway is amino-acid degradation; L-leucine degradation; (S)-3-hydroxy-3-methylglutaryl-CoA from 3-isovaleryl-CoA: step 2/3. Functionally, carboxyltransferase subunit of the 3-methylcrotonyl-CoA carboxylase, an enzyme that catalyzes the conversion of 3-methylcrotonyl-CoA to 3-methylglutaconyl-CoA, a critical step for leucine and isovaleric acid catabolism. The chain is Methylcrotonoyl-CoA carboxylase beta chain, mitochondrial (mccb) from Dictyostelium discoideum (Social amoeba).